Reading from the N-terminus, the 310-residue chain is Tagatose-6-phosphate kinase (310 aa).

It belongs to the carbohydrate kinase PfkB family. LacC subfamily.

It catalyses the reaction D-tagatofuranose 6-phosphate + ATP = D-tagatofuranose 1,6-bisphosphate + ADP + H(+). It functions in the pathway carbohydrate metabolism; D-tagatose 6-phosphate degradation; D-glyceraldehyde 3-phosphate and glycerone phosphate from D-tagatose 6-phosphate: step 1/2. The chain is Tagatose-6-phosphate kinase from Staphylococcus epidermidis (strain ATCC 12228 / FDA PCI 1200).